The sequence spans 95 residues: Aspartyl/glutamyl-tRNA(Asn/Gln) amidotransferase subunit C (95 aa).

The protein belongs to the GatC family. In terms of assembly, heterotrimer of A, B and C subunits.

It carries out the reaction L-glutamyl-tRNA(Gln) + L-glutamine + ATP + H2O = L-glutaminyl-tRNA(Gln) + L-glutamate + ADP + phosphate + H(+). It catalyses the reaction L-aspartyl-tRNA(Asn) + L-glutamine + ATP + H2O = L-asparaginyl-tRNA(Asn) + L-glutamate + ADP + phosphate + 2 H(+). In terms of biological role, allows the formation of correctly charged Asn-tRNA(Asn) or Gln-tRNA(Gln) through the transamidation of misacylated Asp-tRNA(Asn) or Glu-tRNA(Gln) in organisms which lack either or both of asparaginyl-tRNA or glutaminyl-tRNA synthetases. The reaction takes place in the presence of glutamine and ATP through an activated phospho-Asp-tRNA(Asn) or phospho-Glu-tRNA(Gln). The sequence is that of Aspartyl/glutamyl-tRNA(Asn/Gln) amidotransferase subunit C from Azotobacter vinelandii (strain DJ / ATCC BAA-1303).